Consider the following 622-residue polypeptide: Prothrombin (622 aa).

Residues 1 to 24 form the signal peptide; it reads MAHVRGLQLPGCLALAALCSLVHS. Residues 25-43 constitute a propeptide that is removed on maturation; that stretch reads QHVFLAPQQARSLLQRVRR. Positions 44–89 constitute a Gla domain; it reads ANTFLEEVRKGNLERECVEETCSYEEAFEALESSTATDVFWAKYTA. 4-carboxyglutamate occurs at positions 49, 50, 57, 59, 62, 63, 68, 69, 72, and 75. Cys60 and Cys65 are disulfide-bonded. 11 cysteine pairs are disulfide-bonded: Cys90/Cys103, Cys108/Cys186, Cys129/Cys169, Cys157/Cys181, Cys213/Cys291, Cys234/Cys274, Cys262/Cys286, Cys336/Cys482, Cys391/Cys407, Cys536/Cys550, and Cys564/Cys594. Kringle domains are found at residues 108 to 186 and 213 to 291; these read CAEG…IPVC and CVPD…LNYC. N-linked (GlcNAc...) (complex) asparagine glycosylation is found at Asn121 and Asn143. Residues 364 to 618 enclose the Peptidase S1 domain; that stretch reads IVEGSDAEIG…LKKWIQKVID (255 aa). The Charge relay system role is filled by His406. N-linked (GlcNAc...) (complex) asparagine glycosylation occurs at Asn416. Asp462 serves as the catalytic Charge relay system. Positions 551–573 are high affinity receptor-binding region which is also known as the TP508 peptide; that stretch reads AGYKPDEGKRGDACEGDSGGPFV. Ser568 (charge relay system) is an active-site residue.

Belongs to the peptidase S1 family. Heterodimer (named alpha-thrombin) of a light and a heavy chain; disulfide-linked. Forms a heterodimer with SERPINA5. In plasma, interacts (via N-terminus) with alpha-1-microglobulin with molar ratio 1:2 and 1:1; this interaction does not prevent the activation of prothrombin to thrombin. Interacts (thrombin) with iripin-8, a serine protease inhibitor from Ixodes ricinus saliva. Interacts (thrombin) with iripin-3, a serine protease inhibitor from Ixodes ricinus saliva. Interacts (thrombin) with Anopheles albimanus salivary thrombin inhibitor anophelin; the interaction results in thrombin inhibition. Interacts (thrombin) with Anopheles gambiae salivary thrombin inhibitor anophelin; the interaction results in thrombin inhibition. Interacts (thrombin) with Amblyomma variegatum variegin; the interaction results in thrombin inhibition. Interacts (thrombin) with Xenopsylla cheopis salivary thrombin inhibitor XC-42. Interacts (thrombin) with Xenopsylla cheopis salivary thrombin inhibitor XC-43. Post-translationally, the gamma-carboxyglutamyl residues, which bind calcium ions, result from the carboxylation of glutamyl residues by a microsomal enzyme, the vitamin K-dependent carboxylase. The modified residues are necessary for the calcium-dependent interaction with a negatively charged phospholipid surface, which is essential for the conversion of prothrombin to thrombin. N-glycosylated. N-glycan heterogeneity at Asn-121: Hex3HexNAc3 (minor), Hex4HexNAc3 (minor) and Hex5HexNAc4 (major). At Asn-143: Hex4HexNAc3 (minor) and Hex5HexNAc4 (major). In terms of processing, in the penultimate step of the coagulation cascade, prothrombin is converted to thrombin by the prothrombinase complex composed of factor Xa (F10), cofactor Va (F5), and phospholipids. This activation requires factor Xa-catalyzed sequential cleavage at 2 sites, Arg-314 and Arg-363, along 2 possible pathways. In the first pathway, the first cleavage occurs at Arg-314, leading to the formation of the inactive intermediate prethrombin-2. This pathway preferentially occurs on platelets and in the absence of cofactor Va. In the second pathway, the first cleavage occurs at Arg-363, which separates protease domain into 2 chains that remain connected through a disulfide bond and generates the active intermediate meizothrombin. The presence of cofactor Va directs activation along the meizothrombin pathway and greatly accelerates the rate of cleavage at Arg-363, but has a smaller effect on the cleavage of meizothrombin at Arg-314. Meizothrombin accumulates as an intermediate when prothrombinase is assembled on the membrane of red blood cells. Expressed by the liver and secreted in plasma.

The protein localises to the secreted. The protein resides in the extracellular space. It catalyses the reaction Selective cleavage of Arg-|-Gly bonds in fibrinogen to form fibrin and release fibrinopeptides A and B.. Activity is promoted in the presence of negatively charged surfaces, such as polyphosphate and dextran sulfate. Inhibited by SERPINA5. In terms of biological role, thrombin, which cleaves bonds after Arg and Lys, converts fibrinogen to fibrin and activates factors V, VII, VIII, XIII, and, in complex with thrombomodulin, protein C. Functions in blood homeostasis, inflammation and wound healing. Activates coagulation factor XI (F11); activation is promoted by the contact with negatively charged surfaces. Triggers the production of pro-inflammatory cytokines, such as MCP-1/CCL2 and IL8/CXCL8, in endothelial cells. The sequence is that of Prothrombin (F2) from Homo sapiens (Human).